Reading from the N-terminus, the 351-residue chain is MKNKKRVFIASSLSCVLLLLSAANTEANSANKDSQDQTKKEHVDKAQQKEKRNVNDKDKNTPGPDDIGKNGKVTKRTVSEYDKETNILQNLQFDFIDDPTYDKNVLLVKKQGSIHSNLKFESHRNETNASWLKYPSEYHVDFQVQRNPKTEILDQLPKNKISTAKVDSTFSYSLGGKFDSTKGIGRTSSNSYSKSISYNQQNYDTIASGKNNNRHVHWSVVANDLKYGNEIKNRNDEFLFYRNTRLSTVENPELSFASKYRYPALVRSGFNPEFLTYISNEKSNEKTRFEVTYTRNQDILKNKPGIHYGQPILEQNKDGQRFIVVYEVDWKNKTVKVVEKYSDQNKPYKEG.

Residues 1-32 form the signal peptide; it reads MKNKKRVFIASSLSCVLLLLSAANTEANSANK. The segment at 26-74 is disordered; the sequence is EANSANKDSQDQTKKEHVDKAQQKEKRNVNDKDKNTPGPDDIGKNGKVT. A compositionally biased stretch (basic and acidic residues) spans 33–60; it reads DSQDQTKKEHVDKAQQKEKRNVNDKDKN.

The protein belongs to the aerolysin family.

This is an uncharacterized protein from Staphylococcus aureus (strain MRSA252).